A 278-amino-acid chain; its full sequence is Tryptophan synthase alpha chain (278 aa).

Residues E50 and D61 each act as proton acceptor in the active site.

The protein belongs to the TrpA family. Tetramer of two alpha and two beta chains.

It catalyses the reaction (1S,2R)-1-C-(indol-3-yl)glycerol 3-phosphate + L-serine = D-glyceraldehyde 3-phosphate + L-tryptophan + H2O. The protein operates within amino-acid biosynthesis; L-tryptophan biosynthesis; L-tryptophan from chorismate: step 5/5. The alpha subunit is responsible for the aldol cleavage of indoleglycerol phosphate to indole and glyceraldehyde 3-phosphate. This is Tryptophan synthase alpha chain from Rhodopseudomonas palustris (strain ATCC BAA-98 / CGA009).